Consider the following 361-residue polypeptide: Phosphoserine aminotransferase (361 aa).

Position 43 (R43) interacts with L-glutamate. Residues 77-78, W103, T153, D173, and Q196 contribute to the pyridoxal 5'-phosphate site; that span reads AS. K197 carries the N6-(pyridoxal phosphate)lysine modification. 238–239 provides a ligand contact to pyridoxal 5'-phosphate; the sequence is NT.

It belongs to the class-V pyridoxal-phosphate-dependent aminotransferase family. SerC subfamily. As to quaternary structure, homodimer. Pyridoxal 5'-phosphate serves as cofactor.

The protein localises to the cytoplasm. It carries out the reaction O-phospho-L-serine + 2-oxoglutarate = 3-phosphooxypyruvate + L-glutamate. The enzyme catalyses 4-(phosphooxy)-L-threonine + 2-oxoglutarate = (R)-3-hydroxy-2-oxo-4-phosphooxybutanoate + L-glutamate. It functions in the pathway amino-acid biosynthesis; L-serine biosynthesis; L-serine from 3-phospho-D-glycerate: step 2/3. Its pathway is cofactor biosynthesis; pyridoxine 5'-phosphate biosynthesis; pyridoxine 5'-phosphate from D-erythrose 4-phosphate: step 3/5. In terms of biological role, catalyzes the reversible conversion of 3-phosphohydroxypyruvate to phosphoserine and of 3-hydroxy-2-oxo-4-phosphonooxybutanoate to phosphohydroxythreonine. In Pseudomonas syringae pv. syringae (strain B728a), this protein is Phosphoserine aminotransferase.